The sequence spans 1711 residues: Serine/threonine-protein kinase MRCK beta (1711 aa).

In terms of domain architecture, Protein kinase spans 76–342 (FEIIKVIGRG…IEDFKKHAFF (267 aa)). Residues 82–90 (IGRGAFGEV) and lysine 105 each bind ATP. The Proton acceptor role is filled by aspartate 200. Serine 221 and serine 233 each carry phosphoserine; by autocatalysis. Threonine 239 is modified (phosphothreonine; by autocatalysis). An AGC-kinase C-terminal domain is found at 343-413 (EGLNWENIRN…TTESCFSDRG (71 aa)). At threonine 423 the chain carries Phosphothreonine. Coiled-coil stretches lie at residues 431-815 (QRDL…AHWE) and 878-939 (ELQS…FRAD). The tract at residues 461-484 (LQESTQTVQSLHGSSRALSNSNRD) is disordered. The segment covering 463-481 (ESTQTVQSLHGSSRALSNS) has biased composition (polar residues). Arginine 671 is subject to Omega-N-methylarginine. A Phosphotyrosine modification is found at tyrosine 954. The disordered stretch occupies residues 969 to 1009 (SSASEQETQAPKPEASPSMSVAASEQQEDMARPPQRPSAVP). The Phorbol-ester/DAG-type zinc finger occupies 1025 to 1075 (AHQFSIKSFSSPTQCSHCTSLMVGLIRQGYACEVCSFACHVSCKDGAPQVC). One can recognise a PH domain in the interval 1095-1214 (GTAYKGHVKV…WVGILEGLQS (120 aa)). Residues 1240–1513 (IKAILTAAIV…RPLNSEGTLN (274 aa)) enclose the CNH domain. Residues 1583–1596 (ISNPTNFNHVAHMG) enclose the CRIB domain. The tract at residues 1611–1711 (AVPPSQEERP…EGLEQPACDT (101 aa)) is disordered. Over residues 1641-1650 (WPSSGGSEPS) the composition is skewed to polar residues. A compositionally biased stretch (basic and acidic residues) spans 1664–1675 (DFDKEPDSDSTK). Phosphoserine occurs at positions 1680, 1682, 1686, 1690, and 1693.

Belongs to the protein kinase superfamily. AGC Ser/Thr protein kinase family. DMPK subfamily. In terms of assembly, homodimer and homotetramer via the coiled coil regions. Interacts tightly with GTP-bound but not GDP-bound CDC42. Interacts with TJP1, when in the presence of catalytically active CDC42. Forms a tripartite complex with MYO18A and LURAP1 with the latter acting as an adapter connecting CDC42BPB and MYO18A. LURAP1 binding results in activation of CDC42BPB by abolition of its negative autoregulation. Interacts with STRIP1, STRN3 and SIKE1. Interacts with CPNE4 (via VWFA domain). Interacts with LURAP1. Interacts (via AGC-kinase C-terminal domain) with FAM89B/LRAP25 (via LRR repeat). Forms a tripartite complex with FAM89B/LRAP25 and LIMK1. The cofactor is Mg(2+). Proteolytically cleaved by caspases upon apoptosis induction. In terms of tissue distribution, expressed in all tissues examined, with high levels in heart, brain, placenta and lung.

Its subcellular location is the cytoplasm. It localises to the cell membrane. It is found in the cell junction. The protein localises to the cell projection. The protein resides in the lamellipodium. It catalyses the reaction L-seryl-[protein] + ATP = O-phospho-L-seryl-[protein] + ADP + H(+). The enzyme catalyses L-threonyl-[protein] + ATP = O-phospho-L-threonyl-[protein] + ADP + H(+). Maintained in an inactive, closed conformation by an interaction between the kinase domain and the negative autoregulatory C-terminal coiled-coil region. Agonist binding to the phorbol ester binding site disrupts this, releasing the kinase domain to allow N-terminus-mediated dimerization and kinase activation by transautophosphorylation. Inhibited by chelerythrine chloride. Its function is as follows. Serine/threonine-protein kinase which is an important downstream effector of CDC42 and plays a role in the regulation of cytoskeleton reorganization and cell migration. Regulates actin cytoskeletal reorganization via phosphorylation of PPP1R12C and MYL9/MLC2. In concert with MYO18A and LURAP1, is involved in modulating lamellar actomyosin retrograde flow that is crucial to cell protrusion and migration. Phosphorylates PPP1R12A. In concert with FAM89B/LRAP25 mediates the targeting of LIMK1 to the lamellipodium resulting in its activation and subsequent phosphorylation of CFL1 which is important for lamellipodial F-actin regulation. This is Serine/threonine-protein kinase MRCK beta from Homo sapiens (Human).